A 146-amino-acid chain; its full sequence is Ribonuclease H (146 aa).

The RNase H type-1 domain occupies 1–143; it reads MQKKITIYTD…CDELARQAIQ (143 aa). Residues aspartate 10, glutamate 48, aspartate 70, and aspartate 135 each contribute to the Mg(2+) site.

Belongs to the RNase H family. Monomer. The cofactor is Mg(2+).

Its subcellular location is the cytoplasm. The enzyme catalyses Endonucleolytic cleavage to 5'-phosphomonoester.. Its function is as follows. Endonuclease that specifically degrades the RNA of RNA-DNA hybrids. In Chlorobium luteolum (strain DSM 273 / BCRC 81028 / 2530) (Pelodictyon luteolum), this protein is Ribonuclease H.